Reading from the N-terminus, the 147-residue chain is Large ribosomal subunit protein uL11 (147 aa).

This sequence belongs to the universal ribosomal protein uL11 family. As to quaternary structure, part of the ribosomal stalk of the 50S ribosomal subunit. Interacts with L10 and the large rRNA to form the base of the stalk. L10 forms an elongated spine to which L12 dimers bind in a sequential fashion forming a multimeric L10(L12)X complex. Post-translationally, one or more lysine residues are methylated.

Functionally, forms part of the ribosomal stalk which helps the ribosome interact with GTP-bound translation factors. This Sorangium cellulosum (strain So ce56) (Polyangium cellulosum (strain So ce56)) protein is Large ribosomal subunit protein uL11.